Consider the following 396-residue polypeptide: Putative T-box protein 39 (396 aa).

The segment at residues Met-11–Asp-192 is a DNA-binding region (T-box). The disordered stretch occupies residues Ser-185–Thr-215. A compositionally biased stretch (basic and acidic residues) spans Gly-193–Thr-215.

Its subcellular location is the nucleus. The chain is Putative T-box protein 39 (tbx-39) from Caenorhabditis elegans.